Consider the following 78-residue polypeptide: Large ribosomal subunit protein bL28 (78 aa).

It belongs to the bacterial ribosomal protein bL28 family.

This is Large ribosomal subunit protein bL28 from Prochlorococcus marinus (strain MIT 9303).